A 727-amino-acid polypeptide reads, in one-letter code: NADH-ubiquinone oxidoreductase 75 kDa subunit, mitochondrial (727 aa).

Residues 1-23 (MLRIPVRKALVGLSKSPKGCVRT) constitute a mitochondrion transit peptide. The 2Fe-2S ferredoxin-type domain occupies 30–108 (NLIEVFVDGQ…GWNILTNSEK (79 aa)). Residues C64, C75, and C78 each coordinate [2Fe-2S] cluster. The residue at position 84 (K84) is an N6-acetyllysine. [2Fe-2S] cluster is bound at residue C92. The 4Fe-4S His(Cys)3-ligated-type domain maps to 108 to 147 (KSKKAREGVMEFLLANHPLDCPICDQGGECDLQDQSMMFG). [4Fe-4S] cluster is bound by residues H124, C128, C131, C137, C176, C179, C182, and C226. The 4Fe-4S Mo/W bis-MGD-type domain occupies 245–301 (TRKTESIDVMDAVGSNIVVSTRTGEVMRILPRMHEDINEEWISDKTRFAYDGLKRQR). 3 positions are modified to N6-acetyllysine: K467, K499, and K709.

This sequence belongs to the complex I 75 kDa subunit family. As to quaternary structure, core subunit of respiratory chain NADH dehydrogenase (Complex I) which is composed of 45 different subunits. This is the largest subunit of complex I and it is a component of the iron-sulfur (IP) fragment of the enzyme. Complex I associates with ubiquinol-cytochrome reductase complex (Complex III) to form supercomplexes. Interacts with MDM2 and AKAP1. The cofactor is [2Fe-2S] cluster. Requires [4Fe-4S] cluster as cofactor.

The protein resides in the mitochondrion inner membrane. The catalysed reaction is a ubiquinone + NADH + 5 H(+)(in) = a ubiquinol + NAD(+) + 4 H(+)(out). In terms of biological role, core subunit of the mitochondrial membrane respiratory chain NADH dehydrogenase (Complex I) which catalyzes electron transfer from NADH through the respiratory chain, using ubiquinone as an electron acceptor. Essential for catalysing the entry and efficient transfer of electrons within complex I. Plays a key role in the assembly and stability of complex I and participates in the association of complex I with ubiquinol-cytochrome reductase complex (Complex III) to form supercomplexes. This chain is NADH-ubiquinone oxidoreductase 75 kDa subunit, mitochondrial (NDUFS1), found in Macaca fascicularis (Crab-eating macaque).